The sequence spans 217 residues: UPF0502 protein VFMJ11_A0613 (217 aa).

Belongs to the UPF0502 family.

The polypeptide is UPF0502 protein VFMJ11_A0613 (Aliivibrio fischeri (strain MJ11) (Vibrio fischeri)).